Consider the following 300-residue polypeptide: Ribosomal RNA small subunit methyltransferase H (300 aa).

Residues 38 to 40 (GGH), Glu-55, Ile-85, Asp-102, and His-109 each bind S-adenosyl-L-methionine.

This sequence belongs to the methyltransferase superfamily. RsmH family.

It localises to the cytoplasm. It carries out the reaction cytidine(1402) in 16S rRNA + S-adenosyl-L-methionine = N(4)-methylcytidine(1402) in 16S rRNA + S-adenosyl-L-homocysteine + H(+). Specifically methylates the N4 position of cytidine in position 1402 (C1402) of 16S rRNA. The chain is Ribosomal RNA small subunit methyltransferase H from Brachyspira hyodysenteriae (strain ATCC 49526 / WA1).